A 183-amino-acid polypeptide reads, in one-letter code: TATA-box-binding protein 1 (183 aa).

2 repeat units span residues 8-84 (IENV…AKKL) and 99-177 (VQNI…RQQL).

It belongs to the TBP family.

Functionally, general factor that plays a role in the activation of archaeal genes transcribed by RNA polymerase. Binds specifically to the TATA box promoter element which lies close to the position of transcription initiation. This Methanosarcina acetivorans (strain ATCC 35395 / DSM 2834 / JCM 12185 / C2A) protein is TATA-box-binding protein 1.